A 105-amino-acid polypeptide reads, in one-letter code: Large ribosomal subunit protein uL24 (105 aa).

It belongs to the universal ribosomal protein uL24 family. Part of the 50S ribosomal subunit.

In terms of biological role, one of two assembly initiator proteins, it binds directly to the 5'-end of the 23S rRNA, where it nucleates assembly of the 50S subunit. Its function is as follows. One of the proteins that surrounds the polypeptide exit tunnel on the outside of the subunit. The protein is Large ribosomal subunit protein uL24 of Vibrio parahaemolyticus serotype O3:K6 (strain RIMD 2210633).